We begin with the raw amino-acid sequence, 336 residues long: Alcohol dehydrogenase (336 aa).

Cysteine 37, histidine 58, cysteine 89, cysteine 92, cysteine 95, cysteine 103, and cysteine 145 together coordinate Zn(2+).

It belongs to the zinc-containing alcohol dehydrogenase family. Zn(2+) is required as a cofactor.

The catalysed reaction is a primary alcohol + NAD(+) = an aldehyde + NADH + H(+). The enzyme catalyses a secondary alcohol + NAD(+) = a ketone + NADH + H(+). The protein is Alcohol dehydrogenase (adh) of Staphylococcus aureus (strain USA300).